Here is a 334-residue protein sequence, read N- to C-terminus: Beta-glucanase (334 aa).

The signal sequence occupies residues 1–27 (MKNRVISLLMASLLLVLSVIVAPFYKA). The 221-residue stretch at 28–248 (EAATVVNTPF…YVKYYPNGVP (221 aa)) folds into the GH16 domain. The active-site Nucleophile is Glu136. Residue Glu140 is the Proton donor of the active site. The region spanning 267–334 (NLPLKGDVNG…RYLIRAIPSL (68 aa)) is the Dockerin domain.

This sequence belongs to the glycosyl hydrolase 16 family. In terms of assembly, may form part of a multienzyme complex (cellulosome).

The enzyme catalyses Hydrolysis of (1-&gt;4)-beta-D-glucosidic linkages in beta-D-glucans containing (1-&gt;3)- and (1-&gt;4)-bonds.. This is Beta-glucanase (licB) from Acetivibrio thermocellus (strain ATCC 27405 / DSM 1237 / JCM 9322 / NBRC 103400 / NCIMB 10682 / NRRL B-4536 / VPI 7372) (Clostridium thermocellum).